Here is a 499-residue protein sequence, read N- to C-terminus: 6-hydroxynicotinate reductase (499 aa).

4Fe-4S ferredoxin-type domains are found at residues 1 to 29 (MFKI…YEKK) and 31 to 61 (KGAI…NDAP). [4Fe-4S] cluster-binding residues include C9, C12, C15, C19, C41, C44, C47, and C51.

In terms of assembly, homotetramer. An oxidized flavin serves as cofactor. It depends on [2Fe-2S] cluster as a cofactor. Requires [4Fe-4S] cluster as cofactor.

It carries out the reaction 1,4,5,6-tetrahydro-6-oxonicotinate + oxidized 2[4Fe-4S]-[ferredoxin] = 6-hydroxynicotinate + reduced 2[4Fe-4S]-[ferredoxin] + 2 H(+). It functions in the pathway cofactor degradation; nicotinate degradation; propanoate and pyruvate from 6-hydroxynicotinate: step 1/8. Catalyzes the reversible reduction of 6-hydroxynicotinate to 6-oxo-1,4,5,6-tetrahydronicotinate. The protein is 6-hydroxynicotinate reductase of Eubacterium barkeri (Clostridium barkeri).